Reading from the N-terminus, the 170-residue chain is Peptide deformylase-like (170 aa).

Residue E139 is part of the active site.

Belongs to the polypeptide deformylase family.

The protein is Peptide deformylase-like of Bradyrhizobium diazoefficiens (strain JCM 10833 / BCRC 13528 / IAM 13628 / NBRC 14792 / USDA 110).